Reading from the N-terminus, the 508-residue chain is MSSIVTSGVINVPRSSSSSKNLSFSSSSQLSGNKILTVSGNGAPRGRCTLKHVFLTPKAVSDSQNSQTCLDPDASRSVLGIILGGGAGTRLYPLTKKRAKPAVPLGANYRLIDIPVSNCLNSNISKIYVLTQFNSASLNRHLSRAYASNLGGYKNEGFVEVLAAQQSPENPNWFQGTADAVRQYLWLFEEHNVLEYLILAGDHLYRMDYEKFIQAHRESDADITVAALPMDEKRATAFGLMKIDEEGRIIEFAEKPKGEQLKAMKVDTTILGLDDERAKEMPFIASMGIYVISKNVMLDLLRDKFPGANDFGSEVIPGATSIGMRVQAYLYDGYWEDIGTIEAFYNANLGITKKPVPDFSFYDRSSPIYTQPRYLPPSKMLDADITDSVIGEGCVIKNCKIFHSVVGLRSCISEGAIIEDTLLMGADYYETEADKRFLAAKGSVPIGIGKNSHIKRAIVDKNARIGENVKIINSDNVQEAARETEGYFIKSGIVTIIKDALIPSGTVL.

The tract at residues 1 to 27 (MSSIVTSGVINVPRSSSSSKNLSFSSS) is disordered. The N-terminal 59 residues, 1-59 (MSSIVTSGVINVPRSSSSSKNLSFSSSSQLSGNKILTVSGNGAPRGRCTLKHVFLTPKA), are a transit peptide targeting the chloroplast. Residues 15–27 (SSSSSKNLSFSSS) show a composition bias toward low complexity.

It belongs to the bacterial/plant glucose-1-phosphate adenylyltransferase family. Heterotetramer. In terms of tissue distribution, seeds.

Its subcellular location is the plastid. It is found in the chloroplast. The enzyme catalyses alpha-D-glucose 1-phosphate + ATP + H(+) = ADP-alpha-D-glucose + diphosphate. It participates in glycan biosynthesis; starch biosynthesis. With respect to regulation, activated by 3'phosphoglycerate, inhibited by orthophosphate. Allosteric regulation. This protein plays a role in synthesis of starch. It catalyzes the synthesis of the activated glycosyl donor, ADP-glucose from Glc-1-P and ATP. The sequence is that of Glucose-1-phosphate adenylyltransferase small subunit 1, chloroplastic (AGPC) from Vicia faba (Broad bean).